The following is a 734-amino-acid chain: Polyribonucleotide nucleotidyltransferase (734 aa).

Residues D497 and D503 each contribute to the Mg(2+) site. The KH domain maps to 564–623 (PRIIHITIDPDKIRDVIGPGGKVIKKIVEETGAEIDIEDDGRVFIAAVDQEKGRKAQEII). The S1 motif domain occupies 633-707 (GEIYTGRVTR…SQGRLKLSKK (75 aa)). Positions 700–734 (GRLKLSKKEATPPPESTAMKEGRAHRPSRRRESAR) are disordered. Positions 717–734 (AMKEGRAHRPSRRRESAR) are enriched in basic and acidic residues.

Belongs to the polyribonucleotide nucleotidyltransferase family. Mg(2+) is required as a cofactor.

It is found in the cytoplasm. The catalysed reaction is RNA(n+1) + phosphate = RNA(n) + a ribonucleoside 5'-diphosphate. Involved in mRNA degradation. Catalyzes the phosphorolysis of single-stranded polyribonucleotides processively in the 3'- to 5'-direction. The protein is Polyribonucleotide nucleotidyltransferase of Pelotomaculum thermopropionicum (strain DSM 13744 / JCM 10971 / SI).